Here is a 455-residue protein sequence, read N- to C-terminus: Venom prothrombin activator trocarin-D (455 aa).

The first 20 residues, 1–20 (MAPQLLLCLILTFLWSLPEA), serve as a signal peptide directing secretion. The propeptide occupies 21–40 (ESNVFLKSKVANRFLQRTKR). The region spanning 41-86 (SNSLFEEIRPGNIERECIEEKCSKEEAREVFEDNEKTETFWNVYVD) is the Gla domain. Residues glutamate 46, glutamate 47, glutamate 54, glutamate 56, glutamate 59, glutamate 60, glutamate 65, glutamate 66, glutamate 69, glutamate 72, and glutamate 75 each carry the 4-carboxyglutamate modification. Cysteine 57 and cysteine 62 form a disulfide bridge. The 37-residue stretch at 86-122 (DGDQCSSNPCHYRGTCKDGIGSYTCTCLPNYEGKNCE) folds into the EGF-like 1; calcium-binding domain. Intrachain disulfides connect cysteine 90/cysteine 101, cysteine 95/cysteine 110, cysteine 112/cysteine 121, cysteine 129/cysteine 140, cysteine 136/cysteine 149, cysteine 151/cysteine 164, cysteine 172/cysteine 328, cysteine 216/cysteine 221, cysteine 236/cysteine 252, cysteine 376/cysteine 390, and cysteine 401/cysteine 429. An O-linked (Hex...) serine glycan is attached at serine 92. The EGF-like 2 domain maps to 129-164 (CRVDNGNCWHFCKRVQSETQCSCAESYRLGVDGHSC). A propeptide spans 182–209 (REASLPDFVQSQKATLLKKSDNPSPDIR) (activation peptide). In terms of domain architecture, Peptidase S1 spans 210–453 (IVNGMDCKLG…FIPWIKKIMS (244 aa)). The active-site Charge relay system is the histidine 251. Asparagine 254 carries an N-linked (GlcNAc...) asparagine glycan. The active-site Charge relay system is aspartate 308. Catalysis depends on serine 405, which acts as the Charge relay system.

It belongs to the peptidase S1 family. Snake venom subfamily. Heterodimer of a light chain and a heavy chain; disulfide-linked. Post-translationally, gamma-carboxyglutamate residues are formed by vitamin K dependent carboxylation. These residues are essential for the binding of calcium. The O-linked saccharides at Ser-92 are a mixture of Xyl-Glc, and Glc along with smaller amounts of Xyl-GlcNAc, GlcNAc, Gal, GalNAc, Xyl-Gal, and Xyl-GalNAc, suggesting that the glycosyl transferases responsible for this modification are non-specific. The N-linked carbohydrate at Asn-254 (Asn-45 of the heavy chain) is a sialylated and diantennary oligosaccharide. As to expression, expressed by the venom gland.

The protein localises to the secreted. It carries out the reaction Selective cleavage of Arg-|-Thr and then Arg-|-Ile bonds in prothrombin to form thrombin.. Its activity is regulated as follows. Activated by calcium and phospholipids. In terms of biological role, snake prothrombin activator that attacks the hemostatic system of prey. This protein is functionally similar to blood coagulation factor Xa. Induces cyanosis and death in mice at 1 mg/kg body weight during blood clotting. The sequence is that of Venom prothrombin activator trocarin-D from Tropidechis carinatus (Australian rough-scaled snake).